A 405-amino-acid chain; its full sequence is uncharacterized protein (405 aa).

Transmembrane regions (helical) follow at residues 19-39 (IVSI…PLAV), 47-67 (VMGF…FATL), 85-105 (IVVF…TAGL), 107-127 (ASLP…LGIG), 156-176 (GIVT…FYHW), 178-198 (GLQA…LLAI), 224-244 (GMAL…ITLF), 252-272 (GAAF…LLFP), 283-303 (VAMI…VATM), 309-329 (IGVL…GVVA), 344-364 (TYTV…GLVM), and 366-386 (WAGV…ALLL).

Belongs to the major facilitator superfamily. YhhS family.

Its subcellular location is the cell inner membrane. This is an uncharacterized protein from Shigella flexneri.